The sequence spans 248 residues: UPF0736 protein BCB4264_A1231 (248 aa).

The protein belongs to the UPF0736 family.

This Bacillus cereus (strain B4264) protein is UPF0736 protein BCB4264_A1231.